Reading from the N-terminus, the 1268-residue chain is SR-related and CTD-associated factor 8 (1268 aa).

One can recognise a CID domain in the interval 1–139; that stretch reads MEAVKTFNSE…PLLDMAAGIP (139 aa). Thr6 carries the phosphothreonine modification. Lys18 participates in a covalent cross-link: Glycyl lysine isopeptide (Lys-Gly) (interchain with G-Cter in SUMO1). Ser273 is subject to Phosphoserine. Disordered regions lie at residues 322–355 and 385–469; these read QQQP…QQHF and EIFE…PVRS. A compositionally biased stretch (polar residues) spans 342-354; it reads HSASPSQGSSQQH. Residues 394–443 are compositionally biased toward basic residues; it reads VAVRSRSRTHSRSRSRSPRKRRSRSRSGSRKRKHRKRSRSRSRERKRKSS. Basic and acidic residues predominate over residues 447 to 461; sequence SSERRAREREKERQK. The RRM domain maps to 477-551; that stretch reads TTLWVGQVDK…KVIKIAWALN (75 aa). Thr615 bears the Phosphothreonine mark. Ser617 is modified (phosphoserine). The tract at residues 753-808 is disordered; it reads AGNVFNPPSKAEPEEKVPHLTEHQIPSGENTRPVIPSDIPSSAPMLAQPPGASNTS. A compositionally biased stretch (basic and acidic residues) spans 763–774; that stretch reads AEPEEKVPHLTE. Asymmetric dimethylarginine is present on residues Arg915, Arg925, and Arg936. The interval 947–1063 is disordered; it reads QRGIPPPSVL…GRDHFGRPPV (117 aa). Residues 961 to 970 are compositionally biased toward pro residues; the sequence is HPPPRGPFPP. Composition is skewed to basic and acidic residues over residues 1009–1025 and 1032–1063; these read EGDR…REGI and DVRD…RPPV. Arg1071 bears the Asymmetric dimethylarginine mark. The disordered stretch occupies residues 1199 to 1268; sequence ATSQRKGENV…VVESTETEGT (70 aa). The segment covering 1249–1262 has biased composition (low complexity); sequence GTAAGVESEAVVES.

Interacts with POLR2A; via C-terminal heptapeptide repeat domain (CTD) phosphorylated at 'Ser-2' and 'Ser-5'. Identified in a complex with CDC5L and other spliceosomal proteins.

The protein localises to the nucleus. It localises to the nucleus matrix. Its function is as follows. Anti-terminator protein required to prevent early mRNA termination during transcription. Together with SCAF4, acts by suppressing the use of early, alternative poly(A) sites, thereby preventing the accumulation of non-functional truncated proteins. Mechanistically, associates with the phosphorylated C-terminal heptapeptide repeat domain (CTD) of the largest RNA polymerase II subunit (POLR2A), and subsequently binds nascent RNA upstream of early polyadenylation sites to prevent premature mRNA transcript cleavage and polyadenylation. Independently of SCAF4, also acts as a positive regulator of transcript elongation. The chain is SR-related and CTD-associated factor 8 from Rattus norvegicus (Rat).